Consider the following 429-residue polypeptide: Adenylosuccinate synthetase (429 aa).

Residues 12 to 18 (GDEGKGK) and 40 to 42 (GHT) contribute to the GTP site. The active-site Proton acceptor is D13. Residues D13 and G40 each coordinate Mg(2+). Residues 13-16 (DEGK), 38-41 (NAGH), T128, R142, Q223, T238, and R302 contribute to the IMP site. Residue H41 is the Proton donor of the active site. A substrate-binding site is contributed by 298-304 (TTTGRPR). GTP contacts are provided by residues R304, 330–332 (CID), and 412–414 (SVG).

The protein belongs to the adenylosuccinate synthetase family. Homodimer. The cofactor is Mg(2+).

It is found in the cytoplasm. It carries out the reaction IMP + L-aspartate + GTP = N(6)-(1,2-dicarboxyethyl)-AMP + GDP + phosphate + 2 H(+). Its pathway is purine metabolism; AMP biosynthesis via de novo pathway; AMP from IMP: step 1/2. Plays an important role in the de novo pathway of purine nucleotide biosynthesis. Catalyzes the first committed step in the biosynthesis of AMP from IMP. This chain is Adenylosuccinate synthetase, found in Streptococcus mutans serotype c (strain ATCC 700610 / UA159).